Here is a 406-residue protein sequence, read N- to C-terminus: Succinylornithine transaminase (406 aa).

Lysine 252 carries the N6-(pyridoxal phosphate)lysine modification.

This sequence belongs to the class-III pyridoxal-phosphate-dependent aminotransferase family. AstC subfamily. Requires pyridoxal 5'-phosphate as cofactor.

It catalyses the reaction N(2)-succinyl-L-ornithine + 2-oxoglutarate = N-succinyl-L-glutamate 5-semialdehyde + L-glutamate. Its pathway is amino-acid degradation; L-arginine degradation via AST pathway; L-glutamate and succinate from L-arginine: step 3/5. In terms of biological role, catalyzes the transamination of N(2)-succinylornithine and alpha-ketoglutarate into N(2)-succinylglutamate semialdehyde and glutamate. Can also act as an acetylornithine aminotransferase. The polypeptide is Succinylornithine transaminase (Escherichia coli O17:K52:H18 (strain UMN026 / ExPEC)).